A 907-amino-acid chain; its full sequence is Clumping factor B (907 aa).

The signal sequence occupies residues 1 to 44; the sequence is MKKRIDYLSNKQNKYSIRRFTVGTTSVIVGATILFGIGNHQAQA. The YSIRK-G/S signaling motif motif lies at 15–26; it reads YSIRRFTVGTTS. 2 stretches are compositionally biased toward polar residues: residues 44-61 and 68-101; these read ASEQ…NASA and MIET…KPMS. The disordered stretch occupies residues 44-191; sequence ASEQSNDTTQ…AQGTSKPSVR (148 aa). Residues 45-542 are ligand binding A region; the sequence is SEQSNDTTQS…GSADGDSAVN (498 aa). Residues 102 to 119 are compositionally biased toward low complexity; that stretch reads TQTSNTTTTEPASTNETP. Polar residues predominate over residues 134-189; the sequence is QDQTVPQEANSQVDNKTTNDANSIATNSELKNPQTLDLPQSSPQTISNAQGTSKPS. The short motif at 272–276 is the MIDAS-like motif element; it reads DYSNS. Residues 530-879 are disordered; that stretch reads YGGGSADGDS…ETGDKSENTN (350 aa). Pro residues predominate over residues 545–555; the sequence is DPTPGPPVDPE. Positions 556 to 831 are enriched in acidic residues; sequence PSPDPEPEPS…SDSDSDSDSD (276 aa). The span at 835 to 846 shows a compositional bias: polar residues; the sequence is RVTPPNNEQKAP. A compositionally biased stretch (basic and acidic residues) spans 863-876; that stretch reads HKTDALPETGDKSE. Positions 868-872 match the LPXTG sorting signal motif; sequence LPETG. Thr871 carries the post-translational modification Pentaglycyl murein peptidoglycan amidated threonine. The propeptide at 872 to 907 is removed by sortase; that stretch reads GDKSENTNATLFGAMMALLGSLLLFRKRKQDHKEKA.

Belongs to the serine-aspartate repeat-containing protein (SDr) family. In terms of processing, proteolytically cleaved by aureolysin (aur). This cleavage leads to the inactivation of ClfB.

The protein resides in the secreted. It localises to the cell wall. Functionally, cell surface-associated protein implicated in virulence by promoting bacterial attachment to both alpha- and beta-chains of human fibrinogen and inducing the formation of bacterial clumps. This Staphylococcus aureus (strain MW2) protein is Clumping factor B (clfB).